The following is a 355-amino-acid chain: 3-dehydroquinate synthase (355 aa).

Residues glycine 105–aspartate 109, threonine 129–serine 130, lysine 142, lysine 151, and threonine 169–threonine 172 contribute to the NAD(+) site. Zn(2+)-binding residues include glutamate 184, histidine 246, and histidine 263.

It belongs to the sugar phosphate cyclases superfamily. Dehydroquinate synthase family. Requires NAD(+) as cofactor. It depends on Co(2+) as a cofactor. Zn(2+) is required as a cofactor.

Its subcellular location is the cytoplasm. The catalysed reaction is 7-phospho-2-dehydro-3-deoxy-D-arabino-heptonate = 3-dehydroquinate + phosphate. Its pathway is metabolic intermediate biosynthesis; chorismate biosynthesis; chorismate from D-erythrose 4-phosphate and phosphoenolpyruvate: step 2/7. Its function is as follows. Catalyzes the conversion of 3-deoxy-D-arabino-heptulosonate 7-phosphate (DAHP) to dehydroquinate (DHQ). The chain is 3-dehydroquinate synthase from Streptococcus agalactiae serotype V (strain ATCC BAA-611 / 2603 V/R).